The sequence spans 238 residues: Small ribosomal subunit protein eS4 (238 aa).

The S4 RNA-binding domain maps to 38–101; it reads LPLALIIRDV…GEVYRVVPDA (64 aa).

It belongs to the eukaryotic ribosomal protein eS4 family.

The polypeptide is Small ribosomal subunit protein eS4 (Pyrobaculum aerophilum (strain ATCC 51768 / DSM 7523 / JCM 9630 / CIP 104966 / NBRC 100827 / IM2)).